Consider the following 420-residue polypeptide: Light-independent protochlorophyllide reductase subunit N (420 aa).

Positions 21, 46, and 103 each coordinate [4Fe-4S] cluster.

The protein belongs to the BchN/ChlN family. Protochlorophyllide reductase is composed of three subunits; BchL, BchN and BchB. Forms a heterotetramer of two BchB and two BchN subunits. It depends on [4Fe-4S] cluster as a cofactor.

The enzyme catalyses chlorophyllide a + oxidized 2[4Fe-4S]-[ferredoxin] + 2 ADP + 2 phosphate = protochlorophyllide a + reduced 2[4Fe-4S]-[ferredoxin] + 2 ATP + 2 H2O. It participates in porphyrin-containing compound metabolism; bacteriochlorophyll biosynthesis (light-independent). Functionally, component of the dark-operative protochlorophyllide reductase (DPOR) that uses Mg-ATP and reduced ferredoxin to reduce ring D of protochlorophyllide (Pchlide) to form chlorophyllide a (Chlide). This reaction is light-independent. The NB-protein (BchN-BchB) is the catalytic component of the complex. In Chlorobium luteolum (strain DSM 273 / BCRC 81028 / 2530) (Pelodictyon luteolum), this protein is Light-independent protochlorophyllide reductase subunit N.